A 299-amino-acid polypeptide reads, in one-letter code: Acetylglutamate kinase (299 aa).

Substrate-binding positions include 70 to 71 (GG), Arg92, and Asn186.

It belongs to the acetylglutamate kinase family. ArgB subfamily.

It localises to the cytoplasm. It catalyses the reaction N-acetyl-L-glutamate + ATP = N-acetyl-L-glutamyl 5-phosphate + ADP. It functions in the pathway amino-acid biosynthesis; L-arginine biosynthesis; N(2)-acetyl-L-ornithine from L-glutamate: step 2/4. In terms of biological role, catalyzes the ATP-dependent phosphorylation of N-acetyl-L-glutamate. This Thermoanaerobacter pseudethanolicus (strain ATCC 33223 / 39E) (Clostridium thermohydrosulfuricum) protein is Acetylglutamate kinase.